Reading from the N-terminus, the 52-residue chain is Large ribosomal subunit protein bL33 (52 aa).

Belongs to the bacterial ribosomal protein bL33 family.

This chain is Large ribosomal subunit protein bL33, found in Campylobacter jejuni subsp. jejuni serotype O:6 (strain 81116 / NCTC 11828).